Here is a 293-residue protein sequence, read N- to C-terminus: Sec-independent protein translocase protein TatC (293 aa).

6 helical membrane passes run 35–55, 87–107, 123–143, 173–193, 204–224, and 228–248; these read AAIATIIAAIIGTVFLYQPFI, LLKVGMYIGLVIASPVWLYQA, LFGFLTASIFAFACGVAISYF, ILKFVVTFSCAFIIPVILVGI, ILKSWRWVVVLVAVIAALTAP, and IMMMFVLMAPLLIFFFAAIGI.

This sequence belongs to the TatC family. In terms of assembly, the Tat system comprises two distinct complexes: a TatABC complex, containing multiple copies of TatA, TatB and TatC subunits, and a separate TatA complex, containing only TatA subunits. Substrates initially bind to the TatABC complex, which probably triggers association of the separate TatA complex to form the active translocon.

The protein resides in the cell membrane. Its function is as follows. Part of the twin-arginine translocation (Tat) system that transports large folded proteins containing a characteristic twin-arginine motif in their signal peptide across membranes. Together with TatB, TatC is part of a receptor directly interacting with Tat signal peptides. The chain is Sec-independent protein translocase protein TatC from Rothia mucilaginosa (strain DY-18) (Stomatococcus mucilaginosus).